The sequence spans 402 residues: MKLEKLPEEFVQAQPVLEKISEHGFEAYFVGGSVRDVLLGREIHDVDIATSAYPEEIKDIFPYTIDVGIEHGTVLVLAGKSEAEHYEITTFRTESKYTDYRRPDHVDFVRDLREDLKRRDFTVNAFACDFEGQIIDLFDGLTDLKERRLTAVGSALERFNEDALRIMRAMRFASTLDFKIEEKTFSAMRERSHLLEKISVERIFIELDKLLLGSEWRNGLTLLIESEAWKYLPDFQDLALKKVLTELSVDFHFKNSEQAWAALLTRFSNIDVKVFLRKWKVSNEFSKYVADLVSAYELENWDLVSLYHFGLEKALLVDELKIAFGRDIDRERAVFINDQLQIHDKSEIVIAGKDLMDEFSLKPGPELGKILKTIEEKIVKNELKNEQIAILTEVKKMLELEK.

Positions 32 and 35 each coordinate ATP. CTP-binding residues include G32 and R35. Mg(2+) is bound by residues D45 and D47. 5 residues coordinate ATP: R119, D162, R165, R168, and R171. R119, D162, R165, R168, and R171 together coordinate CTP.

Belongs to the tRNA nucleotidyltransferase/poly(A) polymerase family. Bacterial CCA-adding enzyme type 3 subfamily. As to quaternary structure, homodimer. The cofactor is Mg(2+).

It carries out the reaction a tRNA precursor + 2 CTP + ATP = a tRNA with a 3' CCA end + 3 diphosphate. It catalyses the reaction a tRNA with a 3' CCA end + 2 CTP + ATP = a tRNA with a 3' CCACCA end + 3 diphosphate. Functionally, catalyzes the addition and repair of the essential 3'-terminal CCA sequence in tRNAs without using a nucleic acid template. Adds these three nucleotides in the order of C, C, and A to the tRNA nucleotide-73, using CTP and ATP as substrates and producing inorganic pyrophosphate. tRNA 3'-terminal CCA addition is required both for tRNA processing and repair. Also involved in tRNA surveillance by mediating tandem CCA addition to generate a CCACCA at the 3' terminus of unstable tRNAs. While stable tRNAs receive only 3'-terminal CCA, unstable tRNAs are marked with CCACCA and rapidly degraded. The sequence is that of CCA-adding enzyme from Lactococcus lactis subsp. cremoris (strain SK11).